Reading from the N-terminus, the 408-residue chain is Branched-chain amino acid aminotransferase 2, chloroplastic (408 aa).

Residues 1 to 58 constitute a chloroplast transit peptide; sequence MDCAAALLPGFHPNYLLCPSRHFSSLLPKTDLSSPLKFQLQNKQLSLASSHGFSPVIC. A pyridoxal 5'-phosphate-binding site is contributed by R152. K254 (proton acceptor) is an active-site residue. An N6-(pyridoxal phosphate)lysine modification is found at K254. E290 serves as a coordination point for pyridoxal 5'-phosphate.

The protein belongs to the class-IV pyridoxal-phosphate-dependent aminotransferase family. Pyridoxal 5'-phosphate serves as cofactor. Expressed in lupulin glands and leaves.

The protein resides in the plastid. The protein localises to the chloroplast. It carries out the reaction L-isoleucine + 2-oxoglutarate = (S)-3-methyl-2-oxopentanoate + L-glutamate. It catalyses the reaction L-leucine + 2-oxoglutarate = 4-methyl-2-oxopentanoate + L-glutamate. The catalysed reaction is L-valine + 2-oxoglutarate = 3-methyl-2-oxobutanoate + L-glutamate. Its pathway is amino-acid biosynthesis; L-isoleucine biosynthesis; L-isoleucine from 2-oxobutanoate: step 4/4. It participates in amino-acid biosynthesis; L-leucine biosynthesis; L-leucine from 3-methyl-2-oxobutanoate: step 4/4. It functions in the pathway amino-acid biosynthesis; L-valine biosynthesis; L-valine from pyruvate: step 4/4. Functionally, converts 2-oxo acids to branched-chain amino acids. Shows no kinetic preferences corresponding to anabolic or catabolic functions, but likely involved in BCAA biosynthesis. This is Branched-chain amino acid aminotransferase 2, chloroplastic from Humulus lupulus (European hop).